A 437-amino-acid chain; its full sequence is ATP-dependent protease ATPase subunit HslU (437 aa).

Residues Ile-18, 60-65 (GVGKTE), Asp-250, Glu-315, and Arg-387 contribute to the ATP site.

Belongs to the ClpX chaperone family. HslU subfamily. A double ring-shaped homohexamer of HslV is capped on each side by a ring-shaped HslU homohexamer. The assembly of the HslU/HslV complex is dependent on binding of ATP.

The protein localises to the cytoplasm. In terms of biological role, ATPase subunit of a proteasome-like degradation complex; this subunit has chaperone activity. The binding of ATP and its subsequent hydrolysis by HslU are essential for unfolding of protein substrates subsequently hydrolyzed by HslV. HslU recognizes the N-terminal part of its protein substrates and unfolds these before they are guided to HslV for hydrolysis. This is ATP-dependent protease ATPase subunit HslU from Dinoroseobacter shibae (strain DSM 16493 / NCIMB 14021 / DFL 12).